Here is a 579-residue protein sequence, read N- to C-terminus: Arginine--tRNA ligase (579 aa).

A 'HIGH' region motif is present at residues 136 to 146 (ANPTGPLHIGH).

This sequence belongs to the class-I aminoacyl-tRNA synthetase family. As to quaternary structure, monomer.

Its subcellular location is the cytoplasm. It catalyses the reaction tRNA(Arg) + L-arginine + ATP = L-arginyl-tRNA(Arg) + AMP + diphosphate. The protein is Arginine--tRNA ligase of Anaplasma marginale (strain St. Maries).